The chain runs to 26 residues: Peroxidase 1 (26 aa).

A Ca(2+)-binding site is contributed by D15.

This sequence belongs to the peroxidase family. Classical plant (class III) peroxidase subfamily. Heme b is required as a cofactor. Ca(2+) serves as cofactor.

It is found in the secreted. The catalysed reaction is 2 a phenolic donor + H2O2 = 2 a phenolic radical donor + 2 H2O. Removal of H(2)O(2), oxidation of toxic reductants, biosynthesis and degradation of lignin, suberization, auxin catabolism, response to environmental stresses such as wounding, pathogen attack and oxidative stress. These functions might be dependent on each isozyme/isoform in each plant tissue. This chain is Peroxidase 1, found in Vitis vinifera (Grape).